We begin with the raw amino-acid sequence, 265 residues long: Polyphosphate glucokinase (265 aa).

Polar residues predominate over residues 1 to 18 (MTSTGPETSETPGATTQR). Residues 1–22 (MTSTGPETSETPGATTQRHGFG) are disordered. Position 24–29 (24–29 (DVGGSG)) interacts with ATP.

This sequence belongs to the ROK (NagC/XylR) family. Homodimer.

The catalysed reaction is [phosphate](n) + D-glucose = [phosphate](n-1) + D-glucose 6-phosphate + H(+). The enzyme catalyses D-glucose + ATP = D-glucose 6-phosphate + ADP + H(+). Functionally, catalyzes the phosphorylation of glucose using polyphosphate or ATP as the phosphoryl donor. Polyphosphate, rather than ATP, seems to be the major phosphate donor for the enzyme in M.tuberculosis. This is Polyphosphate glucokinase (ppgK) from Mycobacterium tuberculosis (strain CDC 1551 / Oshkosh).